Reading from the N-terminus, the 249-residue chain is Diaminopimelate epimerase (249 aa).

The substrate site is built by N11 and N60. Residue C69 is the Proton donor of the active site. Residues 70 to 71 (GN), N164, and 182 to 183 (ER) contribute to the substrate site. C192 serves as the catalytic Proton acceptor. A substrate-binding site is contributed by 193–194 (GT).

The protein belongs to the diaminopimelate epimerase family. As to quaternary structure, homodimer.

It is found in the cytoplasm. The catalysed reaction is (2S,6S)-2,6-diaminopimelate = meso-2,6-diaminopimelate. It functions in the pathway amino-acid biosynthesis; L-lysine biosynthesis via DAP pathway; DL-2,6-diaminopimelate from LL-2,6-diaminopimelate: step 1/1. In terms of biological role, catalyzes the stereoinversion of LL-2,6-diaminopimelate (L,L-DAP) to meso-diaminopimelate (meso-DAP), a precursor of L-lysine and an essential component of the bacterial peptidoglycan. This Campylobacter jejuni subsp. doylei (strain ATCC BAA-1458 / RM4099 / 269.97) protein is Diaminopimelate epimerase.